The chain runs to 262 residues: Rhomboid-type serine protease 2 (262 aa).

The Cytoplasmic segment spans residues 1–16 (MNWKSYVFPGGHPPAA). A helical membrane pass occupies residues 17–37 (LTTGLVVFLTAIYLLSFIFAL). At 38-57 (REDLSLAPESLFKLQMSRLS) the chain is on the lumenal side. The helical transmembrane segment at 58 to 78 (LYPLIHLSLPHLLFNVLAIWA) threads the bilayer. The Cytoplasmic portion of the chain corresponds to 79–89 (PLNLFEETHGT). A helical transmembrane segment spans residues 90-110 (VYTGVFLNLSALFAGILYCLL). Over 111-112 (GK) the chain is Lumenal. A helical transmembrane segment spans residues 113–133 (LLYPEALVAGASGWCFTLFAY). Residue Ser124 is the Nucleophile of the active site. Residues 134–151 (YSFKESQIRPRTRIFRTD) lie on the Cytoplasmic side of the membrane. The helical transmembrane segment at 152–168 (YSIPTLYTPLVLLVAIA) threads the bilayer. Residues 169-174 (VVIPGS) are Lumenal-facing. Residues 175-191 (SFWGHFFGLCVGYAIGY) traverse the membrane as a helical segment. The active site involves His179. Residues 192-262 (KESWFNKITP…DNSGTVLGTA (71 aa)) are Cytoplasmic-facing. Residues 243–262 (STETPLPLHNDNSGTVLGTA) are disordered. Polar residues predominate over residues 252–262 (NDNSGTVLGTA).

It belongs to the peptidase S54 family. As to quaternary structure, interacts with SNX3.

It is found in the golgi apparatus membrane. The protein localises to the golgi apparatus. It localises to the cis-Golgi network membrane. The enzyme catalyses Cleaves type-1 transmembrane domains using a catalytic dyad composed of serine and histidine that are contributed by different transmembrane domains.. Functionally, probable rhomboid-type serine protease that catalyzes intramembrane proteolysis. This is Rhomboid-type serine protease 2 (RBD2) from Saccharomyces cerevisiae (strain ATCC 204508 / S288c) (Baker's yeast).